A 303-amino-acid polypeptide reads, in one-letter code: Aspartate carbamoyltransferase catalytic subunit (303 aa).

2 residues coordinate carbamoyl phosphate: Arg49 and Thr50. Lys77 contacts L-aspartate. The carbamoyl phosphate site is built by Arg99, His126, and Gln129. Arg159 and Arg211 together coordinate L-aspartate. Residues Ser252 and Pro253 each contribute to the carbamoyl phosphate site.

It belongs to the aspartate/ornithine carbamoyltransferase superfamily. ATCase family. As to quaternary structure, heterododecamer (2C3:3R2) of six catalytic PyrB chains organized as two trimers (C3), and six regulatory PyrI chains organized as three dimers (R2).

It catalyses the reaction carbamoyl phosphate + L-aspartate = N-carbamoyl-L-aspartate + phosphate + H(+). Its pathway is pyrimidine metabolism; UMP biosynthesis via de novo pathway; (S)-dihydroorotate from bicarbonate: step 2/3. In terms of biological role, catalyzes the condensation of carbamoyl phosphate and aspartate to form carbamoyl aspartate and inorganic phosphate, the committed step in the de novo pyrimidine nucleotide biosynthesis pathway. This Listeria monocytogenes serotype 4b (strain F2365) protein is Aspartate carbamoyltransferase catalytic subunit.